Consider the following 889-residue polypeptide: Disease resistance protein RPS5 (889 aa).

Gly-2 carries the N-myristoyl glycine lipid modification. Cys-4 carries the S-palmitoyl cysteine lipid modification. Positions Ile-29–Glu-58 form a coiled coil. Positions Ser-140–Gly-444 constitute an NB-ARC domain. Gly-183–Thr-190 provides a ligand contact to ATP. LRR repeat units follow at residues Thr-518 to Ala-539, Ala-540 to Cys-561, His-564 to Leu-586, Ser-588 to Lys-610, Lys-611 to Trp-633, and Asn-634 to Gln-656.

The protein belongs to the disease resistance NB-LRR family. In terms of assembly, in uninfected plants, interacts with PBS1 through the coiled coil domain. Homodimer.

The protein resides in the cell membrane. Functionally, disease resistance (R) protein that specifically recognizes the avrPphB type III effector avirulence protein from Pseudomonas syringae. Also confers resistance against Hyaloperonospora parasitica (downy mildew). Resistance proteins guard the plant against pathogens that contain an appropriate avirulence protein via an indirect interaction with this avirulence protein. That triggers a defense system including the hypersensitive response, which restricts the pathogen growth. Requires PBS1 to trigger the defense reaction against avrPphB. In case of infection by Pseudomonas syringae, AvrPphB triggers RPS5-mediated defense mechanism via the cleavage of PBS1, suggesting that the cleavage of PBS1 could trigger an exchange of ADP for ATP, thereby activating RPS5. May function as a fine-tuned sensor of alterations in the structure of the effector target PBS1. This chain is Disease resistance protein RPS5 (RPS5), found in Arabidopsis thaliana (Mouse-ear cress).